Consider the following 377-residue polypeptide: Subtilisin-like protease CPC735_012930 (377 aa).

An N-terminal signal peptide occupies residues Met-1–Ala-20. Positions Gly-21–Thr-118 are excised as a propeptide. The Inhibitor I9 domain occupies Ser-36–Met-114. The Peptidase S8 domain occupies Ser-128 to Phe-377. Catalysis depends on charge relay system residues Asp-160 and His-191. A glycan (N-linked (GlcNAc...) asparagine) is linked at Asn-252. The active-site Charge relay system is Ser-323. N-linked (GlcNAc...) asparagine glycans are attached at residues Asn-364 and Asn-373.

This sequence belongs to the peptidase S8 family.

It localises to the secreted. Secreted subtilisin-like serine protease with keratinolytic activity that contributes to pathogenicity. The sequence is that of Subtilisin-like protease CPC735_012930 from Coccidioides posadasii (strain C735) (Valley fever fungus).